The following is a 92-amino-acid chain: Small ribosomal subunit protein uS19 (92 aa).

This sequence belongs to the universal ribosomal protein uS19 family.

Protein S19 forms a complex with S13 that binds strongly to the 16S ribosomal RNA. This is Small ribosomal subunit protein uS19 from Shewanella halifaxensis (strain HAW-EB4).